Consider the following 74-residue polypeptide: Conotoxin ArMKLT2-041 (74 aa).

A signal peptide spans 1-22 (MKLTCVLIVAVLFLTACQLIAA). Residues 23–46 (DDSRDLQKFPRRKMRDGMLNTKNT) constitute a propeptide that is removed on maturation. Position 49 is a pyrrolidone carboxylic acid (glutamine 49). 3 disulfide bridges follow: cysteine 50-cysteine 65, cysteine 57-cysteine 68, and cysteine 64-cysteine 73.

Belongs to the conotoxin O1 superfamily. As to expression, expressed by the venom duct.

It is found in the secreted. This is Conotoxin ArMKLT2-041 from Conus arenatus (Sand-dusted cone).